A 205-amino-acid polypeptide reads, in one-letter code: Small ribosomal subunit protein uS4 (205 aa).

The disordered stretch occupies residues 18 to 46 (NIWGRPKSPVNRREYGPGQHGQRRKGKLS). One can recognise an S4 RNA-binding domain in the interval 94 to 157 (RRLDTVVYRA…KQLTFVLEAN (64 aa)).

It belongs to the universal ribosomal protein uS4 family. In terms of assembly, part of the 30S ribosomal subunit. Contacts protein S5. The interaction surface between S4 and S5 is involved in control of translational fidelity.

One of the primary rRNA binding proteins, it binds directly to 16S rRNA where it nucleates assembly of the body of the 30S subunit. Its function is as follows. With S5 and S12 plays an important role in translational accuracy. The polypeptide is Small ribosomal subunit protein uS4 (Rhodopseudomonas palustris (strain BisB18)).